Here is a 276-residue protein sequence, read N- to C-terminus: Pantothenate synthetase (276 aa).

27 to 34 is an ATP binding site; that stretch reads MGALHRGH. His-34 acts as the Proton donor in catalysis. Gln-58 lines the (R)-pantoate pocket. Gln-58 contacts beta-alanine. 147–150 lines the ATP pocket; that stretch reads GKKD. Gln-153 provides a ligand contact to (R)-pantoate. ATP-binding positions include Val-176 and 184–187; that span reads LSSR.

The protein belongs to the pantothenate synthetase family. In terms of assembly, homodimer.

The protein localises to the cytoplasm. It catalyses the reaction (R)-pantoate + beta-alanine + ATP = (R)-pantothenate + AMP + diphosphate + H(+). It participates in cofactor biosynthesis; (R)-pantothenate biosynthesis; (R)-pantothenate from (R)-pantoate and beta-alanine: step 1/1. Its function is as follows. Catalyzes the condensation of pantoate with beta-alanine in an ATP-dependent reaction via a pantoyl-adenylate intermediate. This Helicobacter pylori (strain J99 / ATCC 700824) (Campylobacter pylori J99) protein is Pantothenate synthetase.